Consider the following 46-residue polypeptide: Transcriptional regulator SEHBP (46 aa).

As to quaternary structure, interacts with histone H2B. Also interacts with chromatin-binding proteins HMGN1 and HMGN3.

The protein resides in the nucleus. The protein localises to the cytoplasm. Its function is as follows. Plays a role in transcription regulation. The chain is Transcriptional regulator SEHBP from Homo sapiens (Human).